The following is a 411-amino-acid chain: UDP-N-acetylmuramoylalanine--D-glutamate ligase (411 aa).

Position 92 to 98 (92 to 98 (GTDGKST)) interacts with ATP.

The protein belongs to the MurCDEF family.

It is found in the cytoplasm. The enzyme catalyses UDP-N-acetyl-alpha-D-muramoyl-L-alanine + D-glutamate + ATP = UDP-N-acetyl-alpha-D-muramoyl-L-alanyl-D-glutamate + ADP + phosphate + H(+). Its pathway is cell wall biogenesis; peptidoglycan biosynthesis. Cell wall formation. Catalyzes the addition of glutamate to the nucleotide precursor UDP-N-acetylmuramoyl-L-alanine (UMA). In Hydrogenobaculum sp. (strain Y04AAS1), this protein is UDP-N-acetylmuramoylalanine--D-glutamate ligase.